Reading from the N-terminus, the 227-residue chain is Endonuclease V (227 aa).

Mg(2+) is bound by residues aspartate 46 and aspartate 114.

This sequence belongs to the endonuclease V family. It depends on Mg(2+) as a cofactor.

The protein resides in the cytoplasm. The enzyme catalyses Endonucleolytic cleavage at apurinic or apyrimidinic sites to products with a 5'-phosphate.. Functionally, DNA repair enzyme involved in the repair of deaminated bases. Selectively cleaves double-stranded DNA at the second phosphodiester bond 3' to a deoxyinosine leaving behind the intact lesion on the nicked DNA. The protein is Endonuclease V of Alkalilimnicola ehrlichii (strain ATCC BAA-1101 / DSM 17681 / MLHE-1).